Reading from the N-terminus, the 306-residue chain is Lipoyl synthase (306 aa).

Positions 55, 60, 66, 81, 85, 88, and 294 each coordinate [4Fe-4S] cluster. A Radical SAM core domain is found at 67 to 283 (WNHRTATFLL…RSYALARGFT (217 aa)).

Belongs to the radical SAM superfamily. Lipoyl synthase family. Requires [4Fe-4S] cluster as cofactor.

It is found in the cytoplasm. The enzyme catalyses [[Fe-S] cluster scaffold protein carrying a second [4Fe-4S](2+) cluster] + N(6)-octanoyl-L-lysyl-[protein] + 2 oxidized [2Fe-2S]-[ferredoxin] + 2 S-adenosyl-L-methionine + 4 H(+) = [[Fe-S] cluster scaffold protein] + N(6)-[(R)-dihydrolipoyl]-L-lysyl-[protein] + 4 Fe(3+) + 2 hydrogen sulfide + 2 5'-deoxyadenosine + 2 L-methionine + 2 reduced [2Fe-2S]-[ferredoxin]. Its pathway is protein modification; protein lipoylation via endogenous pathway; protein N(6)-(lipoyl)lysine from octanoyl-[acyl-carrier-protein]: step 2/2. In terms of biological role, catalyzes the radical-mediated insertion of two sulfur atoms into the C-6 and C-8 positions of the octanoyl moiety bound to the lipoyl domains of lipoate-dependent enzymes, thereby converting the octanoylated domains into lipoylated derivatives. This Chloroflexus aurantiacus (strain ATCC 29364 / DSM 637 / Y-400-fl) protein is Lipoyl synthase.